A 79-amino-acid chain; its full sequence is ESX secretion system protein YukD (79 aa).

The protein belongs to the EsaB family.

In terms of biological role, required for YukE secretion. Probable component or regulator of the ESX/ESAT-6-like secretion system (BsEss). The chain is ESX secretion system protein YukD (yukD) from Bacillus subtilis (strain 168).